Here is a 296-residue protein sequence, read N- to C-terminus: Lipoyl synthase (296 aa).

7 residues coordinate [4Fe-4S] cluster: Cys37, Cys42, Cys48, Cys63, Cys67, Cys70, and Ser276. One can recognise a Radical SAM core domain in the interval 49 to 265 (WSKKHTTVMI…ERVAKTKGFL (217 aa)).

Belongs to the radical SAM superfamily. Lipoyl synthase family. The cofactor is [4Fe-4S] cluster.

Its subcellular location is the cytoplasm. The enzyme catalyses [[Fe-S] cluster scaffold protein carrying a second [4Fe-4S](2+) cluster] + N(6)-octanoyl-L-lysyl-[protein] + 2 oxidized [2Fe-2S]-[ferredoxin] + 2 S-adenosyl-L-methionine + 4 H(+) = [[Fe-S] cluster scaffold protein] + N(6)-[(R)-dihydrolipoyl]-L-lysyl-[protein] + 4 Fe(3+) + 2 hydrogen sulfide + 2 5'-deoxyadenosine + 2 L-methionine + 2 reduced [2Fe-2S]-[ferredoxin]. It functions in the pathway protein modification; protein lipoylation via endogenous pathway; protein N(6)-(lipoyl)lysine from octanoyl-[acyl-carrier-protein]: step 2/2. Its function is as follows. Catalyzes the radical-mediated insertion of two sulfur atoms into the C-6 and C-8 positions of the octanoyl moiety bound to the lipoyl domains of lipoate-dependent enzymes, thereby converting the octanoylated domains into lipoylated derivatives. The protein is Lipoyl synthase of Rickettsia peacockii (strain Rustic).